A 363-amino-acid polypeptide reads, in one-letter code: Peptide chain release factor 2 (363 aa).

Residue glutamine 251 is modified to N5-methylglutamine.

The protein belongs to the prokaryotic/mitochondrial release factor family. In terms of processing, methylated by PrmC. Methylation increases the termination efficiency of RF2.

Its subcellular location is the cytoplasm. In terms of biological role, peptide chain release factor 2 directs the termination of translation in response to the peptide chain termination codons UGA and UAA. The polypeptide is Peptide chain release factor 2 (Helicobacter pylori (strain Shi470)).